A 183-amino-acid chain; its full sequence is ATP synthase subunit delta (183 aa).

It belongs to the ATPase delta chain family. F-type ATPases have 2 components, F(1) - the catalytic core - and F(0) - the membrane proton channel. F(1) has five subunits: alpha(3), beta(3), gamma(1), delta(1), epsilon(1). CF(0) has four main subunits: a(1), b(1), b'(1) and c(10-14). The alpha and beta chains form an alternating ring which encloses part of the gamma chain. F(1) is attached to F(0) by a central stalk formed by the gamma and epsilon chains, while a peripheral stalk is formed by the delta, b and b' chains.

The protein resides in the cellular thylakoid membrane. Its function is as follows. F(1)F(0) ATP synthase produces ATP from ADP in the presence of a proton or sodium gradient. F-type ATPases consist of two structural domains, F(1) containing the extramembraneous catalytic core and F(0) containing the membrane proton channel, linked together by a central stalk and a peripheral stalk. During catalysis, ATP synthesis in the catalytic domain of F(1) is coupled via a rotary mechanism of the central stalk subunits to proton translocation. This protein is part of the stalk that links CF(0) to CF(1). It either transmits conformational changes from CF(0) to CF(1) or is implicated in proton conduction. The polypeptide is ATP synthase subunit delta (Trichormus variabilis (strain ATCC 29413 / PCC 7937) (Anabaena variabilis)).